The chain runs to 356 residues: Vesicular integral-membrane protein VIP36 (356 aa).

An N-terminal signal peptide occupies residues 1-44; the sequence is MAAEGWIWRWGWGRRCLGRPGLLGPGPGPTTPLFLLLLLGSVTA. Residues 45–322 lie on the Lumenal side of the membrane; that stretch reads DITDGNSEHL…FRSGPLTGWR (278 aa). The region spanning 52 to 276 is the L-type lectin-like domain; it reads EHLKREHSLI…DIISMKLFQL (225 aa). A carbohydrate-binding residues include Ser-96 and Asp-131. Residues Asp-162, Tyr-164, and Asn-166 each contribute to the Ca(2+) site. A carbohydrate is bound at residue 164–166; the sequence is YPN. Asn-183 carries an N-linked (GlcNAc...) asparagine glycan. Residue His-190 participates in a carbohydrate binding. Ca(2+) is bound at residue Asp-193. The cysteines at positions 202 and 239 are disulfide-linked. A carbohydrate is bound at residue 260 to 262; it reads GDL. Residues 323–345 traverse the membrane as a helical segment; the sequence is VFLLLLCALLGIVVCAVVGAVVF. Residues 346-356 lie on the Cytoplasmic side of the membrane; it reads QKRQERNKRFY.

Requires Ca(2+) as cofactor. In terms of tissue distribution, ubiquitous.

It is found in the endoplasmic reticulum-Golgi intermediate compartment membrane. Its subcellular location is the golgi apparatus membrane. The protein resides in the endoplasmic reticulum membrane. Its function is as follows. Plays a role as an intracellular lectin in the early secretory pathway. Interacts with N-acetyl-D-galactosamine and high-mannose type glycans and may also bind to O-linked glycans. Involved in the transport and sorting of glycoproteins carrying high mannose-type glycans. The chain is Vesicular integral-membrane protein VIP36 (LMAN2) from Homo sapiens (Human).